A 548-amino-acid polypeptide reads, in one-letter code: Probable nuclear hormone receptor HR3 (548 aa).

The segment at 1-27 (MNNNQFHELFGSQWPPDQHGGHSSAST) is disordered. Positions 101–176 (IIPCKVCGDK…LGMSRDAVKF (76 aa)) form a DNA-binding region, nuclear receptor. 2 consecutive NR C4-type zinc fingers follow at residues 104 to 124 (CKVCGDKSSGVHYGVITCEGC) and 140 to 164 (CPRNKACVVDRVNRNRCQYCRLQKC). The disordered stretch occupies residues 198–228 (MRAQNDAAPDSVYDAQQQTPSSSDQFHGHYN). The span at 211 to 222 (DAQQQTPSSSDQ) shows a compositional bias: polar residues. The region spanning 295–539 (ISKVLVKSLA…PALYKELFSL (245 aa)) is the NR LBD domain.

Belongs to the nuclear hormone receptor family. NR1 subfamily.

Its subcellular location is the nucleus. In terms of biological role, putative receptor whose ligand is not yet known. The chain is Probable nuclear hormone receptor HR3 (HR3) from Manduca sexta (Tobacco hawkmoth).